Consider the following 135-residue polypeptide: C-type lectin BPL (135 aa).

Intrachain disulfides connect C3-C14, C31-C131, C38-C133, and C106-C123. One can recognise a C-type lectin domain in the interval M10–Q132. Q96, D98, E104, and D120 together coordinate Ca(2+). A Galactose-binding motif is present at residues Q96 to D98.

It belongs to the true venom lectin family. In terms of assembly, homodimer; disulfide-linked. Expressed by the venom gland.

The protein localises to the secreted. In terms of biological role, galactose-binding protein which recognizes specific carbohydrate structures and agglutinates a variety of animal cells by binding to cell-surface glycoproteins and glycolipids. Calcium-dependent lectin. Shows high hemagglutinating activity in the presence of human erythrocytes, which are agglutinated with a minimum hemagglutination concentration (MHC) of 2.5-0.35 ug/ml. Causes indirect nephrotoxicity. Causes reductions in perfusion pressures, renal vascular resistance, urinary flow, glomerular filtration rate, sodium, potassium and chloride tubular transport. Its effects may be caused by the release of inflammatory mediators. The protein is C-type lectin BPL of Bothrops pirajai (Piraja's lancehead).